We begin with the raw amino-acid sequence, 132 residues long: Small ribosomal subunit protein uS8 (132 aa).

This sequence belongs to the universal ribosomal protein uS8 family. In terms of assembly, part of the 30S ribosomal subunit. Contacts proteins S5 and S12.

Its function is as follows. One of the primary rRNA binding proteins, it binds directly to 16S rRNA central domain where it helps coordinate assembly of the platform of the 30S subunit. The sequence is that of Small ribosomal subunit protein uS8 from Mycobacterium sp. (strain KMS).